We begin with the raw amino-acid sequence, 254 residues long: 5-oxoprolinase subunit A (254 aa).

Belongs to the LamB/PxpA family. Forms a complex composed of PxpA, PxpB and PxpC.

The catalysed reaction is 5-oxo-L-proline + ATP + 2 H2O = L-glutamate + ADP + phosphate + H(+). Catalyzes the cleavage of 5-oxoproline to form L-glutamate coupled to the hydrolysis of ATP to ADP and inorganic phosphate. This chain is 5-oxoprolinase subunit A, found in Acinetobacter baumannii (strain ACICU).